We begin with the raw amino-acid sequence, 476 residues long: Glutamyl-tRNA(Gln) amidotransferase subunit A (476 aa).

Catalysis depends on charge relay system residues Lys-77 and Ser-152. The Acyl-ester intermediate role is filled by Ser-176.

Belongs to the amidase family. GatA subfamily. As to quaternary structure, heterotrimer of A, B and C subunits.

It catalyses the reaction L-glutamyl-tRNA(Gln) + L-glutamine + ATP + H2O = L-glutaminyl-tRNA(Gln) + L-glutamate + ADP + phosphate + H(+). In terms of biological role, allows the formation of correctly charged Gln-tRNA(Gln) through the transamidation of misacylated Glu-tRNA(Gln) in organisms which lack glutaminyl-tRNA synthetase. The reaction takes place in the presence of glutamine and ATP through an activated gamma-phospho-Glu-tRNA(Gln). The chain is Glutamyl-tRNA(Gln) amidotransferase subunit A from Acidobacterium capsulatum (strain ATCC 51196 / DSM 11244 / BCRC 80197 / JCM 7670 / NBRC 15755 / NCIMB 13165 / 161).